The primary structure comprises 238 residues: Ribonuclease PH (238 aa).

Phosphate contacts are provided by residues Arg-86 and 124-126 (GTR).

It belongs to the RNase PH family. In terms of assembly, homohexameric ring arranged as a trimer of dimers.

The enzyme catalyses tRNA(n+1) + phosphate = tRNA(n) + a ribonucleoside 5'-diphosphate. Phosphorolytic 3'-5' exoribonuclease that plays an important role in tRNA 3'-end maturation. Removes nucleotide residues following the 3'-CCA terminus of tRNAs; can also add nucleotides to the ends of RNA molecules by using nucleoside diphosphates as substrates, but this may not be physiologically important. Probably plays a role in initiation of 16S rRNA degradation (leading to ribosome degradation) during starvation. This is Ribonuclease PH from Solibacter usitatus (strain Ellin6076).